A 459-amino-acid chain; its full sequence is MLKIFNTLTREKEIFKPIHANKVGMYVCGITVYDLCHVGHGRTFVCFDVIARYLRYLGYDLTYVRNITDVDDKIIKRALENNETCNQLVEKMIAEMHKDFDALNVLRPDVEPRATHHIPEIIAMIEKLIARQHAYVSANGDVMFDVESFKEYGKLSRQNLEQLQAGARVEIVNVKKNPMDFVLWKMSKPGEPSWPSPWGEGRPGWHIECSAMNHKELGEHFDIHGGGSDLTFPHHENEIAQSCCAHSGRYVNYWIHSGMIMVDREKMSKSLGNFFTLREVLSLYDAESVRYFLLTAHYRSQLNYSEENLNLAHSALERLYTALRGTDPTAVATEGQNYLAAFREAMDDDFNTPKAISVLFEIAREINKLKNEDILKANALAARLRELAGILGLLYQDPEQFLQSGSDNDEVALIEALIKQRNDARAAKDWASADAARNKLAEMGVVLEDNVNGTTWRKQ.

Cys28 contacts Zn(2+). Residues 30 to 40 (ITVYDLCHVGH) carry the 'HIGH' region motif. Residues Cys209, His234, and Glu238 each coordinate Zn(2+). A 'KMSKS' region motif is present at residues 266–270 (KMSKS). An ATP-binding site is contributed by Lys269.

It belongs to the class-I aminoacyl-tRNA synthetase family. Monomer. It depends on Zn(2+) as a cofactor.

Its subcellular location is the cytoplasm. The catalysed reaction is tRNA(Cys) + L-cysteine + ATP = L-cysteinyl-tRNA(Cys) + AMP + diphosphate. The polypeptide is Cysteine--tRNA ligase (cysS) (Pasteurella multocida (strain Pm70)).